A 186-amino-acid polypeptide reads, in one-letter code: MKTAHEIRPGNVIMLDGSPWVVQKTETTRSGRNAAIVKLKLKNLLLNSGTETTFKGEDKLEDIVLDRLDCTYSYFADPMYVFMDAEYNQYDVEAENLGDAAAYIVDGMEETCQVTFYDGKAISVEMPTTIVREVIYTEPSARGDTSGKVMKPATITGGGTVSVADFVKVGDKIEIDTRTGEFKKRV.

It belongs to the elongation factor P family.

It localises to the cytoplasm. Its pathway is protein biosynthesis; polypeptide chain elongation. Its function is as follows. Involved in peptide bond synthesis. Stimulates efficient translation and peptide-bond synthesis on native or reconstituted 70S ribosomes in vitro. Probably functions indirectly by altering the affinity of the ribosome for aminoacyl-tRNA, thus increasing their reactivity as acceptors for peptidyl transferase. This Shewanella sp. (strain W3-18-1) protein is Elongation factor P.